Reading from the N-terminus, the 194-residue chain is Imidazoleglycerol-phosphate dehydratase (194 aa).

It belongs to the imidazoleglycerol-phosphate dehydratase family.

The protein localises to the cytoplasm. It carries out the reaction D-erythro-1-(imidazol-4-yl)glycerol 3-phosphate = 3-(imidazol-4-yl)-2-oxopropyl phosphate + H2O. It functions in the pathway amino-acid biosynthesis; L-histidine biosynthesis; L-histidine from 5-phospho-alpha-D-ribose 1-diphosphate: step 6/9. This Lactiplantibacillus plantarum (strain ATCC BAA-793 / NCIMB 8826 / WCFS1) (Lactobacillus plantarum) protein is Imidazoleglycerol-phosphate dehydratase.